We begin with the raw amino-acid sequence, 96 residues long: UPF0235 protein YggU (96 aa).

The protein belongs to the UPF0235 family.

The polypeptide is UPF0235 protein YggU (Salmonella typhimurium (strain LT2 / SGSC1412 / ATCC 700720)).